Here is a 135-residue protein sequence, read N- to C-terminus: T-cell receptor gamma chain V region V108A (135 aa).

The signal sequence occupies residues methionine 1 to glycine 18. The segment at glutamine 19–methionine 116 is v segment. Residues arginine 117–isoleucine 135 are j segment.

This chain is T-cell receptor gamma chain V region V108A, found in Mus musculus (Mouse).